The primary structure comprises 371 residues: Bifunctional enzyme IspD/IspF (371 aa).

The interval 1-210 (MSEMSLIMLA…LNLPTPSFEI (210 aa)) is 2-C-methyl-D-erythritol 4-phosphate cytidylyltransferase. The 2-C-methyl-D-erythritol 2,4-cyclodiphosphate synthase stretch occupies residues 211-371 (FTGNGFDVHE…NLKYFDWTRL (161 aa)). Residues Asp-217 and His-219 each coordinate a divalent metal cation. 4-CDP-2-C-methyl-D-erythritol 2-phosphate contacts are provided by residues 217–219 (DVH) and 243–244 (HS). His-251 provides a ligand contact to a divalent metal cation. Residues 265 to 267 (DIG), 270 to 274 (YPDTD), 341 to 344 (TTTE), Phe-348, and Arg-351 contribute to the 4-CDP-2-C-methyl-D-erythritol 2-phosphate site.

In the N-terminal section; belongs to the IspD/TarI cytidylyltransferase family. IspD subfamily. It in the C-terminal section; belongs to the IspF family. A divalent metal cation serves as cofactor.

The enzyme catalyses 2-C-methyl-D-erythritol 4-phosphate + CTP + H(+) = 4-CDP-2-C-methyl-D-erythritol + diphosphate. It catalyses the reaction 4-CDP-2-C-methyl-D-erythritol 2-phosphate = 2-C-methyl-D-erythritol 2,4-cyclic diphosphate + CMP. The protein operates within isoprenoid biosynthesis; isopentenyl diphosphate biosynthesis via DXP pathway; isopentenyl diphosphate from 1-deoxy-D-xylulose 5-phosphate: step 2/6. It functions in the pathway isoprenoid biosynthesis; isopentenyl diphosphate biosynthesis via DXP pathway; isopentenyl diphosphate from 1-deoxy-D-xylulose 5-phosphate: step 4/6. Its function is as follows. Bifunctional enzyme that catalyzes the formation of 4-diphosphocytidyl-2-C-methyl-D-erythritol from CTP and 2-C-methyl-D-erythritol 4-phosphate (MEP) (IspD), and catalyzes the conversion of 4-diphosphocytidyl-2-C-methyl-D-erythritol 2-phosphate (CDP-ME2P) to 2-C-methyl-D-erythritol 2,4-cyclodiphosphate (ME-CPP) with a corresponding release of cytidine 5-monophosphate (CMP) (IspF). This chain is Bifunctional enzyme IspD/IspF, found in Campylobacter jejuni (strain RM1221).